Here is a 156-residue protein sequence, read N- to C-terminus: E3 ubiquitin-protein ligase RNF181 (156 aa).

The RING-type; atypical zinc finger occupies 79–120; it reads CPVCLLEFEEGETVRQLPCEHLFHSSCILPWLGKTNSCPLCR.

This sequence belongs to the RNF181 family.

The catalysed reaction is S-ubiquitinyl-[E2 ubiquitin-conjugating enzyme]-L-cysteine + [acceptor protein]-L-lysine = [E2 ubiquitin-conjugating enzyme]-L-cysteine + N(6)-ubiquitinyl-[acceptor protein]-L-lysine.. Its pathway is protein modification; protein ubiquitination. E3 ubiquitin-protein ligase which accepts ubiquitin from an E2 ubiquitin-conjugating enzyme in the form of a thioester and then directly transfers the ubiquitin to targeted substrates. Catalyzes monoubiquitination of 26S proteasome subunit PSMC2/RPT1. The protein is E3 ubiquitin-protein ligase RNF181 (rnf181) of Xenopus tropicalis (Western clawed frog).